The following is a 141-amino-acid chain: Large ribosomal subunit protein uL13 (141 aa).

The protein belongs to the universal ribosomal protein uL13 family. As to quaternary structure, part of the 50S ribosomal subunit.

Functionally, this protein is one of the early assembly proteins of the 50S ribosomal subunit, although it is not seen to bind rRNA by itself. It is important during the early stages of 50S assembly. The protein is Large ribosomal subunit protein uL13 of Helicobacter pylori (strain Shi470).